Reading from the N-terminus, the 236-residue chain is Small ribosomal subunit protein uS2c (236 aa).

This sequence belongs to the universal ribosomal protein uS2 family.

Its subcellular location is the plastid. The chain is Small ribosomal subunit protein uS2c (rps2) from Cuscuta gronovii (Common dodder).